The primary structure comprises 382 residues: Adenosine 3'-phospho 5'-phosphosulfate transporter 2 (382 aa).

The segment covering 1 to 10 (MSVSNRNGNG) has biased composition (polar residues). The disordered stretch occupies residues 1 to 33 (MSVSNRNGNGSEVIYVGDRSTNRPPRNAPSPDE). The next 10 membrane-spanning stretches (helical) occupy residues 56 to 76 (LCCAGVFVLYLLYGYMQELIF), 83 to 103 (PYGWFLTLVQFAYYTVFGYVE), 121 to 141 (VLLAFLTLGTMGLSNSSLGYL), 144 to 164 (PTQVIFKCCKLVPVLIGSILI), 170 to 190 (GPLDFLAAIAMCLGLTLFTLA), 197 to 217 (NFNPFGVLLISLALLCDAAIG), 234 to 254 (VVIYSYGIGFVYLSVIMLLTG), 271 to 291 (FGYAFLFSLSGYLGIQIVLTL), 299 to 319 (LAATVTTARKAVTIALSFVFF), and 323 to 343 (FTINYLWSGLIVVLGIYLNVY).

Belongs to the nucleotide-sugar transporter family. SLC35B subfamily.

It localises to the golgi apparatus membrane. Functionally, mediates the transport of adenosine 3'-phospho 5'-phosphosulfate (PAPS), from cytosol into Golgi. PAPS is a universal sulfuryl donor for sulfation events that take place in the Golgi. Essential for viability. Involved in glycosaminoglycan synthesis and the subsequent signaling. May be involved in hh and dpp signaling by controlling the sulfation of heparan sulfate (HS). In Aedes aegypti (Yellowfever mosquito), this protein is Adenosine 3'-phospho 5'-phosphosulfate transporter 2.